The following is a 185-amino-acid chain: Ribosome-recycling factor (185 aa).

Belongs to the RRF family.

It localises to the cytoplasm. Functionally, responsible for the release of ribosomes from messenger RNA at the termination of protein biosynthesis. May increase the efficiency of translation by recycling ribosomes from one round of translation to another. The polypeptide is Ribosome-recycling factor (Serratia proteamaculans (strain 568)).